The primary structure comprises 179 residues: uncharacterized protein (179 aa).

A signal peptide (or 24) is located at residues M1–S27.

This is an uncharacterized protein from Haemophilus influenzae (strain ATCC 51907 / DSM 11121 / KW20 / Rd).